The primary structure comprises 459 residues: Putrescine aminotransferase (459 aa).

Residues 150–151 and Gln274 contribute to the pyridoxal 5'-phosphate site; that span reads GT. Lys300 bears the N6-(pyridoxal phosphate)lysine mark. Thr332 is a pyridoxal 5'-phosphate binding site.

Belongs to the class-III pyridoxal-phosphate-dependent aminotransferase family. Putrescine aminotransferase subfamily. Pyridoxal 5'-phosphate is required as a cofactor.

The enzyme catalyses an alkane-alpha,omega-diamine + 2-oxoglutarate = an omega-aminoaldehyde + L-glutamate. It carries out the reaction putrescine + 2-oxoglutarate = 1-pyrroline + L-glutamate + H2O. The catalysed reaction is cadaverine + 2-oxoglutarate = 5-aminopentanal + L-glutamate. Its pathway is amine and polyamine degradation; putrescine degradation; 4-aminobutanal from putrescine (transaminase route): step 1/1. In terms of biological role, catalyzes the aminotransferase reaction from putrescine to 2-oxoglutarate, leading to glutamate and 4-aminobutanal, which spontaneously cyclizes to form 1-pyrroline. This is the first step in one of two pathways for putrescine degradation, where putrescine is converted into 4-aminobutanoate (gamma-aminobutyrate or GABA) via 4-aminobutanal. Also functions as a cadaverine transaminase in a a L-lysine degradation pathway to succinate that proceeds via cadaverine, glutarate and L-2-hydroxyglutarate. The polypeptide is Putrescine aminotransferase (Escherichia coli (strain K12 / MC4100 / BW2952)).